Reading from the N-terminus, the 184-residue chain is Ribosome-recycling factor (184 aa).

This sequence belongs to the RRF family.

The protein resides in the cytoplasm. Responsible for the release of ribosomes from messenger RNA at the termination of protein biosynthesis. May increase the efficiency of translation by recycling ribosomes from one round of translation to another. In Fervidobacterium nodosum (strain ATCC 35602 / DSM 5306 / Rt17-B1), this protein is Ribosome-recycling factor.